The following is a 362-amino-acid chain: Adenosine kinase (362 aa).

An N-acetylalanine modification is found at Ala2. Positions 8 to 16 (PKPKKLKVE) match the Nuclear localization signal motif. Asp35 contacts adenosine. Ser49 contributes to the Mg(2+) binding site. Phosphotyrosine is present on Tyr77. Positions 147 and 148 each coordinate Mg(2+). An adenosine-binding site is contributed by Gln306. Asp317 serves as the catalytic Proton acceptor.

This sequence belongs to the carbohydrate kinase PfkB family. In terms of assembly, monomer. Mg(2+) serves as cofactor. In terms of tissue distribution, widely expressed. Highest level in placenta, liver, muscle and kidney.

It localises to the nucleus. The protein resides in the cytoplasm. It catalyses the reaction adenosine + ATP = AMP + ADP + H(+). Its pathway is purine metabolism; AMP biosynthesis via salvage pathway; AMP from adenosine: step 1/1. With respect to regulation, activity is inhibited by 5-iodotubercidin and 5'-amino-5'-deoxyadenosine. Functionally, catalyzes the phosphorylation of the purine nucleoside adenosine at the 5' position in an ATP-dependent manner. Serves as a potential regulator of concentrations of extracellular adenosine and intracellular adenine nucleotides. The polypeptide is Adenosine kinase (Homo sapiens (Human)).